The chain runs to 189 residues: Parkinson disease protein 7 homolog (189 aa).

Position 2 is an N-acetylalanine (Ala2). S-palmitoyl cysteine attachment occurs at residues Cys46 and Cys53. Tyr67 is subject to Phosphotyrosine. The Nucleophile role is filled by Cys106. Cys106 carries the cysteine sulfinic acid (-SO2H); alternate modification. Residue Cys106 is the site of S-palmitoyl cysteine; alternate attachment. His126 is a catalytic residue. Lys130 is covalently cross-linked (Glycyl lysine isopeptide (Lys-Gly) (interchain with G-Cter in SUMO)). The residue at position 148 (Lys148) is an N6-acetyllysine. An N6-succinyllysine modification is found at Lys182.

This sequence belongs to the peptidase C56 family. In terms of assembly, homodimer. Binds EFCAB6/DJBP and PIAS2. Part of a ternary complex containing PARK7, EFCAB6/DJBP and AR. Interacts (via N-terminus) with OTUD7B. Interacts with BBS1, HIPK1, CLCF1 and MTERF. Forms a complex with PINK1 and PRKN. Interacts (via C-terminus) with NCF1; the interaction is enhanced by LPS and modulates NCF1 phosphorylation and membrane translocation. Interacts with NENF. Deglycase activity does not require glutathione as a cofactor, however, glycated glutathione constitutes a PARK7 substrate. serves as cofactor. Post-translationally, sumoylated on Lys-130 by PIAS2 or PIAS4; which is essential for cell-growth promoting activity and transforming activity. Undergoes cleavage of a C-terminal peptide and subsequent activation of protease activity in response to oxidative stress. In terms of tissue distribution, ubiquitous. Detected on epididymal sperm. Highly expressed in testis and prostate. Detected at lower levels in heart, lung, brain, liver, kidney, seminal vesicle, caput and corpus epididymis.

Its subcellular location is the cell membrane. The protein localises to the cytoplasm. The protein resides in the membrane raft. It is found in the nucleus. It localises to the mitochondrion. Its subcellular location is the endoplasmic reticulum. The enzyme catalyses N(omega)-(1-hydroxy-2-oxopropyl)-L-arginyl-[protein] + H2O = lactate + L-arginyl-[protein] + H(+). It carries out the reaction N(6)-(1-hydroxy-2-oxopropyl)-L-lysyl-[protein] + H2O = lactate + L-lysyl-[protein] + H(+). It catalyses the reaction S-(1-hydroxy-2-oxopropyl)-L-cysteinyl-[protein] + H2O = lactate + L-cysteinyl-[protein] + H(+). The catalysed reaction is N(omega)-(1-hydroxy-2-oxoethyl)-L-arginyl-[protein] + H2O = L-arginyl-[protein] + glycolate + H(+). The enzyme catalyses N(6)-(1-hydroxy-2-oxoethyl)-L-lysyl-[protein] + H2O = glycolate + L-lysyl-[protein] + H(+). It carries out the reaction S-(1-hydroxy-2-oxoethyl)-L-cysteinyl-[protein] + H2O = glycolate + L-cysteinyl-[protein] + H(+). It catalyses the reaction N(2)-(1-hydroxy-2-oxopropyl)-dGTP + H2O = lactate + dGTP + H(+). The catalysed reaction is N(2)-(1-hydroxy-2-oxopropyl)-GTP + H2O = lactate + GTP + H(+). The enzyme catalyses N(2)-(1-hydroxy-2-oxopropyl)-GDP + H2O = lactate + GDP + H(+). It carries out the reaction N(2)-(1-hydroxy-2-oxopropyl)-GMP + H2O = lactate + GMP + H(+). It catalyses the reaction N(2)-(1-hydroxy-2-oxoethyl)-dGTP + H2O = dGTP + glycolate + H(+). The catalysed reaction is N(2)-(1-hydroxy-2-oxoethyl)-GTP + H2O = glycolate + GTP + H(+). The enzyme catalyses N(2)-(1-hydroxy-2-oxoethyl)-GDP + H2O = glycolate + GDP + H(+). It carries out the reaction N(2)-(1-hydroxy-2-oxoethyl)-GMP + H2O = glycolate + GMP + H(+). It catalyses the reaction an N(2)-(1-hydroxy-2-oxopropyl)-guanosine in RNA + H2O = a guanosine in RNA + lactate + H(+). The catalysed reaction is an N(2)-(1-hydroxy-2-oxopropyl)-2'-deoxyguanosine in DNA + H2O = a 2'-deoxyguanosine in DNA + lactate + H(+). The enzyme catalyses an N(2)-(1-hydroxy-2-oxoethyl)-guanosine in RNA + H2O = a guanosine in RNA + glycolate + H(+). It carries out the reaction an N(2)-(1-hydroxy-2-oxoethyl)-2'-deoxyguanosine in DNA + H2O = a 2'-deoxyguanosine in DNA + glycolate + H(+). Protein and nucleotide deglycase that catalyzes the deglycation of the Maillard adducts formed between amino groups of proteins or nucleotides and reactive carbonyl groups of glyoxals. Thus, functions as a protein deglycase that repairs methylglyoxal- and glyoxal-glycated proteins, and releases repaired proteins and lactate or glycolate, respectively. Deglycates cysteine, arginine and lysine residues in proteins, and thus reactivates these proteins by reversing glycation by glyoxals. Acts on early glycation intermediates (hemithioacetals and aminocarbinols), preventing the formation of advanced glycation endproducts (AGE) that cause irreversible damage. Also functions as a nucleotide deglycase able to repair glycated guanine in the free nucleotide pool (GTP, GDP, GMP, dGTP) and in DNA and RNA. Is thus involved in a major nucleotide repair system named guanine glycation repair (GG repair), dedicated to reversing methylglyoxal and glyoxal damage via nucleotide sanitization and direct nucleic acid repair. Also displays an apparent glyoxalase activity that in fact reflects its deglycase activity. Plays an important role in cell protection against oxidative stress and cell death acting as oxidative stress sensor and redox-sensitive chaperone and protease; functions probably related to its primary function. It is involved in neuroprotective mechanisms like the stabilization of NFE2L2 and PINK1 proteins, male fertility as a positive regulator of androgen signaling pathway as well as cell growth and transformation through, for instance, the modulation of NF-kappa-B signaling pathway. Eliminates hydrogen peroxide and protects cells against hydrogen peroxide-induced cell death. Required for correct mitochondrial morphology and function as well as for autophagy of dysfunctional mitochondria. Plays a role in regulating expression or stability of the mitochondrial uncoupling proteins SLC25A14 and SLC25A27 in dopaminergic neurons of the substantia nigra pars compacta and attenuates the oxidative stress induced by calcium entry into the neurons via L-type channels during pacemaking. Regulates astrocyte inflammatory responses, may modulate lipid rafts-dependent endocytosis in astrocytes and neuronal cells. In pancreatic islets, involved in the maintenance of mitochondrial reactive oxygen species (ROS) levels and glucose homeostasis in an age- and diet dependent manner. Protects pancreatic beta cells from cell death induced by inflammatory and cytotoxic setting. Binds to a number of mRNAs containing multiple copies of GG or CC motifs and partially inhibits their translation but dissociates following oxidative stress. Metal-binding protein able to bind copper as well as toxic mercury ions, enhances the cell protection mechanism against induced metal toxicity. In macrophages, interacts with the NADPH oxidase subunit NCF1 to direct NADPH oxidase-dependent ROS production, and protects against sepsis. The polypeptide is Parkinson disease protein 7 homolog (Rattus norvegicus (Rat)).